Consider the following 218-residue polypeptide: Ribonuclease T (218 aa).

The Exonuclease domain maps to 20 to 194; that stretch reads VVIDVETAGF…YDAERTAELF (175 aa). Aspartate 23, glutamate 25, histidine 181, and aspartate 186 together coordinate Mg(2+). The Proton donor/acceptor role is filled by histidine 181.

It belongs to the RNase T family. In terms of assembly, homodimer. The cofactor is Mg(2+).

Functionally, trims short 3' overhangs of a variety of RNA species, leaving a one or two nucleotide 3' overhang. Responsible for the end-turnover of tRNA: specifically removes the terminal AMP residue from uncharged tRNA (tRNA-C-C-A). Also appears to be involved in tRNA biosynthesis. This chain is Ribonuclease T, found in Baumannia cicadellinicola subsp. Homalodisca coagulata.